Here is a 698-residue protein sequence, read N- to C-terminus: Polyribonucleotide nucleotidyltransferase (698 aa).

Mg(2+) contacts are provided by aspartate 485 and aspartate 491. Positions 552–611 constitute a KH domain; that stretch reads PRIHTIKINTDKIRDVIGKGGAVIRSLCEETGTTIEIEDDGTVKIAATSGEQADDAINRI. In terms of domain architecture, S1 motif spans 621 to 689; the sequence is GTIYTGKVVR…RQGRVRLSIK (69 aa).

This sequence belongs to the polyribonucleotide nucleotidyltransferase family. Component of the RNA degradosome, which is a multiprotein complex involved in RNA processing and mRNA degradation. The cofactor is Mg(2+).

It localises to the cytoplasm. The enzyme catalyses RNA(n+1) + phosphate = RNA(n) + a ribonucleoside 5'-diphosphate. Involved in mRNA degradation. Catalyzes the phosphorolysis of single-stranded polyribonucleotides processively in the 3'- to 5'-direction. In Psychromonas ingrahamii (strain DSM 17664 / CCUG 51855 / 37), this protein is Polyribonucleotide nucleotidyltransferase.